The following is a 174-amino-acid chain: UPF0664 stress-induced protein C29B12.11c (174 aa).

The disordered stretch occupies residues 147–174; the sequence is HLDPLPPYHRPSSSQDQPPHYEEAVNKS. Residues 165 to 174 show a composition bias toward basic and acidic residues; that stretch reads PHYEEAVNKS.

The protein belongs to the UPF0664 family.

It localises to the cytoplasm. The protein localises to the nucleus. This is UPF0664 stress-induced protein C29B12.11c from Schizosaccharomyces pombe (strain 972 / ATCC 24843) (Fission yeast).